A 107-amino-acid polypeptide reads, in one-letter code: Large ribosomal subunit protein uL23 (107 aa).

Belongs to the universal ribosomal protein uL23 family. In terms of assembly, part of the 50S ribosomal subunit. Contacts protein L29, and trigger factor when it is bound to the ribosome.

One of the early assembly proteins it binds 23S rRNA. One of the proteins that surrounds the polypeptide exit tunnel on the outside of the ribosome. Forms the main docking site for trigger factor binding to the ribosome. This is Large ribosomal subunit protein uL23 from Rhodopirellula baltica (strain DSM 10527 / NCIMB 13988 / SH1).